We begin with the raw amino-acid sequence, 545 residues long: Chaperonin GroEL 2 (545 aa).

Residues 29-32 (TLGP), 86-90 (DGTTT), G413, 479-481 (NAA), and D495 each bind ATP.

This sequence belongs to the chaperonin (HSP60) family. In terms of assembly, forms a cylinder of 14 subunits composed of two heptameric rings stacked back-to-back. Interacts with the co-chaperonin GroES.

Its subcellular location is the cytoplasm. It catalyses the reaction ATP + H2O + a folded polypeptide = ADP + phosphate + an unfolded polypeptide.. Its function is as follows. Together with its co-chaperonin GroES, plays an essential role in assisting protein folding. The GroEL-GroES system forms a nano-cage that allows encapsulation of the non-native substrate proteins and provides a physical environment optimized to promote and accelerate protein folding. This chain is Chaperonin GroEL 2, found in Prochlorococcus marinus (strain MIT 9301).